The chain runs to 314 residues: BURP domain-containing protein 8 (314 aa).

Positions 1-16 (MDLVRLTSLLPPSVMG) are cleaved as a signal peptide. The region spanning 98-314 (FFLEKDLFPG…PLGDMLWVRN (217 aa)) is the BURP domain.

In terms of tissue distribution, expressed in shoot and panicles.

The polypeptide is BURP domain-containing protein 8 (BURP8) (Oryza sativa subsp. japonica (Rice)).